Consider the following 390-residue polypeptide: Leucine aminopeptidase 1 (390 aa).

The N-terminal stretch at 1–18 is a signal peptide; the sequence is MKLSTALVLGATATGAWS. Positions 19 to 90 are excised as a propeptide; it reads YAIPQLEQEV…FPTLDAGSYV (72 aa). Asparagine 120 carries N-linked (GlcNAc...) asparagine glycosylation. 4 residues coordinate Zn(2+): histidine 190, aspartate 209, glutamate 248, and aspartate 275. A disulfide bridge connects residues cysteine 324 and cysteine 328. Histidine 357 serves as a coordination point for Zn(2+).

Belongs to the peptidase M28 family. M28E subfamily. As to quaternary structure, monomer. Zn(2+) is required as a cofactor.

The protein localises to the secreted. Its function is as follows. Extracellular aminopeptidase that allows assimilation of proteinaceous substrates. The sequence is that of Leucine aminopeptidase 1 (lap1) from Emericella nidulans (strain FGSC A4 / ATCC 38163 / CBS 112.46 / NRRL 194 / M139) (Aspergillus nidulans).